A 204-amino-acid chain; its full sequence is MECELVDLSNNNVGSVELNPLIFSAKQKLSILHDIVRWQLAKRRVGAHKTKGISDVSGTTAKPYGQKRTGRARQGSLRSPQFRGGGIIFGPVVRSHAYSLNKKVRKFGLKIALSLKYLNNQVVVLDSLNVDVKKTSKMCEYIKNFKFSSFLIVGDYGDDLLRAAKNLHYVDLIKPIGLNVFDILNHECVMLTKDTLKHLEGRLL.

Residues 56–79 (VSGTTAKPYGQKRTGRARQGSLRS) form a disordered region.

This sequence belongs to the universal ribosomal protein uL4 family. In terms of assembly, part of the 50S ribosomal subunit.

One of the primary rRNA binding proteins, this protein initially binds near the 5'-end of the 23S rRNA. It is important during the early stages of 50S assembly. It makes multiple contacts with different domains of the 23S rRNA in the assembled 50S subunit and ribosome. Its function is as follows. Forms part of the polypeptide exit tunnel. The polypeptide is Large ribosomal subunit protein uL4 (Wolbachia pipientis subsp. Culex pipiens (strain wPip)).